Consider the following 506-residue polypeptide: Parthenolide synthase (506 aa).

The helical transmembrane segment at 10 to 30 (LFLPTLCTILISYIIIKYVLI) threads the bilayer. Residues Asn-32, Asn-63, Asn-121, Asn-168, and Asn-175 are each glycosylated (N-linked (GlcNAc...) asparagine). The chain crosses the membrane as a helical span at residues 301-321 (LLLNVLLGAIDTTFTTIVWAM). Cys-448 provides a ligand contact to heme.

The protein belongs to the cytochrome P450 family.

The protein resides in the membrane. It catalyses the reaction (+)-costunolide + reduced [NADPH--hemoprotein reductase] + O2 = parthenolide + oxidized [NADPH--hemoprotein reductase] + H2O + H(+). The protein operates within secondary metabolite biosynthesis; terpenoid biosynthesis. Involved in the biosynthesis of germacrene-derived sesquiterpene lactones. Component of the parthenolide biosynthetic pathway; parthenolide and conjugates are promising anti-cancer drugs highly active against colon cancer cells. Catalyzes the conversion of costunolide to parthenolide. The protein is Parthenolide synthase of Tanacetum parthenium (Feverfew).